We begin with the raw amino-acid sequence, 714 residues long: DNA ligase (714 aa).

Residues 47 to 51 (DAEYD), 96 to 97 (SL), and glutamate 128 each bind NAD(+). The active-site N6-AMP-lysine intermediate is the lysine 130. Positions 151, 188, 306, and 330 each coordinate NAD(+). Residues cysteine 435, cysteine 438, cysteine 453, and cysteine 459 each coordinate Zn(2+). A BRCT domain is found at 637–714 (RRDTAVAGKT…TEDEWLALIS (78 aa)).

Belongs to the NAD-dependent DNA ligase family. LigA subfamily. It depends on Mg(2+) as a cofactor. Mn(2+) is required as a cofactor.

The enzyme catalyses NAD(+) + (deoxyribonucleotide)n-3'-hydroxyl + 5'-phospho-(deoxyribonucleotide)m = (deoxyribonucleotide)n+m + AMP + beta-nicotinamide D-nucleotide.. In terms of biological role, DNA ligase that catalyzes the formation of phosphodiester linkages between 5'-phosphoryl and 3'-hydroxyl groups in double-stranded DNA using NAD as a coenzyme and as the energy source for the reaction. It is essential for DNA replication and repair of damaged DNA. The protein is DNA ligase of Rhodopseudomonas palustris (strain HaA2).